We begin with the raw amino-acid sequence, 160 residues long: Deoxyuridine 5'-triphosphate nucleotidohydrolase (160 aa).

Serine 80, glycine 93, aspartate 96, tyrosine 99, lysine 104, arginine 149, phenylalanine 154, and glycine 155 together coordinate dUMP.

Belongs to the dUTPase family. In terms of assembly, homotrimer. Mg(2+) serves as cofactor.

The enzyme catalyses dUTP + H2O = dUMP + diphosphate + H(+). The protein operates within pyrimidine metabolism; dUMP biosynthesis; dUMP from dCTP (dUTP route): step 2/2. Its function is as follows. Involved in nucleotide metabolism via production of dUMP, the immediate precursor of thymidine nucleotides, and decreases the intracellular concentration of dUTP so that uracil cannot be incorporated into DNA. In Debaryomyces hansenii (strain ATCC 36239 / CBS 767 / BCRC 21394 / JCM 1990 / NBRC 0083 / IGC 2968) (Yeast), this protein is Deoxyuridine 5'-triphosphate nucleotidohydrolase (DUT1).